The following is a 102-amino-acid chain: Putative RNA-binding protein RbpA (102 aa).

One can recognise an RRM domain in the interval 2 to 79 (SIYVGNLSYE…RDLKVNKAKP (78 aa)). Basic and acidic residues predominate over residues 73-84 (KVNKAKPREDRG). A disordered region spans residues 73 to 102 (KVNKAKPREDRGPSGGNRGGYGGGGGRNRY). Over residues 85–102 (PSGGNRGGYGGGGGRNRY) the composition is skewed to gly residues.

This chain is Putative RNA-binding protein RbpA (rbpA), found in Nostoc sp. (strain PCC 7120 / SAG 25.82 / UTEX 2576).